The following is a 489-amino-acid chain: Siroheme synthase (489 aa).

The segment at 1-203 is precorrin-2 dehydrogenase /sirohydrochlorin ferrochelatase; it reads MDFFPVFMRL…GREDAARETL (203 aa). NAD(+) contacts are provided by residues 22 to 23 and 43 to 44; these read PV and PA. The segment at 218-489 is uroporphyrinogen-III C-methyltransferase; it reads GEVFLVGAGP…ARSSTEGAEA (272 aa). Position 227 (P227) interacts with S-adenosyl-L-methionine. D250 (proton acceptor) is an active-site residue. The active-site Proton donor is the K272. S-adenosyl-L-methionine is bound by residues 303 to 305, I308, 333 to 334, M385, and G414; these read GGD and TA.

The protein in the N-terminal section; belongs to the precorrin-2 dehydrogenase / sirohydrochlorin ferrochelatase family. In the C-terminal section; belongs to the precorrin methyltransferase family.

It catalyses the reaction uroporphyrinogen III + 2 S-adenosyl-L-methionine = precorrin-2 + 2 S-adenosyl-L-homocysteine + H(+). The catalysed reaction is precorrin-2 + NAD(+) = sirohydrochlorin + NADH + 2 H(+). It carries out the reaction siroheme + 2 H(+) = sirohydrochlorin + Fe(2+). It functions in the pathway cofactor biosynthesis; adenosylcobalamin biosynthesis; precorrin-2 from uroporphyrinogen III: step 1/1. The protein operates within cofactor biosynthesis; adenosylcobalamin biosynthesis; sirohydrochlorin from precorrin-2: step 1/1. It participates in porphyrin-containing compound metabolism; siroheme biosynthesis; precorrin-2 from uroporphyrinogen III: step 1/1. Its pathway is porphyrin-containing compound metabolism; siroheme biosynthesis; siroheme from sirohydrochlorin: step 1/1. It functions in the pathway porphyrin-containing compound metabolism; siroheme biosynthesis; sirohydrochlorin from precorrin-2: step 1/1. Multifunctional enzyme that catalyzes the SAM-dependent methylations of uroporphyrinogen III at position C-2 and C-7 to form precorrin-2 via precorrin-1. Then it catalyzes the NAD-dependent ring dehydrogenation of precorrin-2 to yield sirohydrochlorin. Finally, it catalyzes the ferrochelation of sirohydrochlorin to yield siroheme. This chain is Siroheme synthase, found in Thioalkalivibrio sulfidiphilus (strain HL-EbGR7).